Consider the following 657-residue polypeptide: Glycogen debranching enzyme (657 aa).

Residue Asp-336 is the Nucleophile of the active site. Catalysis depends on Glu-371, which acts as the Proton donor. The span at 458–467 (NEANGEENRD) shows a compositional bias: basic and acidic residues. The interval 458 to 479 (NEANGEENRDGTNNNYSNNHGK) is disordered.

It belongs to the glycosyl hydrolase 13 family.

The enzyme catalyses Hydrolysis of (1-&gt;6)-alpha-D-glucosidic linkages to branches with degrees of polymerization of three or four glucose residues in limit dextrin.. Its pathway is glycan degradation; glycogen degradation. Removes maltotriose and maltotetraose chains that are attached by 1,6-alpha-linkage to the limit dextrin main chain, generating a debranched limit dextrin. The sequence is that of Glycogen debranching enzyme from Escherichia coli O8 (strain IAI1).